The chain runs to 215 residues: Large ribosomal subunit protein uL3c (215 aa).

The segment at arginine 132–glycine 151 is disordered.

Belongs to the universal ribosomal protein uL3 family. As to quaternary structure, part of the 50S ribosomal subunit.

The protein localises to the plastid. It is found in the chloroplast. Its function is as follows. One of the primary rRNA binding proteins, it binds directly near the 3'-end of the 23S rRNA, where it nucleates assembly of the 50S subunit. This Cyanidium caldarium (Red alga) protein is Large ribosomal subunit protein uL3c (rpl3).